The primary structure comprises 248 residues: uncharacterized protein (248 aa).

The 240-residue stretch at 7–246 folds into the ABC transporter domain; it reads VQLSNLSWTF…PASTILLPTS (240 aa). 43-50 is a binding site for ATP; sequence GQSGSGKS.

The protein belongs to the ABC transporter superfamily.

This is an uncharacterized protein from Mycobacterium tuberculosis (strain CDC 1551 / Oshkosh).